The sequence spans 147 residues: MSEIPFWQSKTLDEMTDVQWESLCDGCGQCCLHKLMDEDSDEIYFTNVACKQLNIKTCQCRNYERRFEYEPDCIKLTRDNLPTFEWLPHTCAYRLLAEGKGLPTWHPLLTGSKVEMHGERISVRHIAVKESEVQDWEDHILNHPKRA.

It belongs to the UPF0260 family.

The polypeptide is UPF0260 protein Ent638_2368 (Enterobacter sp. (strain 638)).